The sequence spans 203 residues: 5-formyltetrahydrofolate cyclo-ligase (203 aa).

Residue alanine 2 is modified to N-acetylalanine. Residues 10-14 (KRGLR) and arginine 14 each bind ATP. Residues leucine 56, glutamate 61, and 148 to 152 (RGKGY) contribute to the substrate site. 145–153 (RLGRGKGYY) provides a ligand contact to ATP. 2 residues coordinate Mg(2+): aspartate 154 and aspartate 189.

This sequence belongs to the 5-formyltetrahydrofolate cyclo-ligase family. As to quaternary structure, monomer. Requires Mg(2+) as cofactor.

The protein localises to the cytoplasm. It carries out the reaction (6S)-5-formyl-5,6,7,8-tetrahydrofolate + ATP = (6R)-5,10-methenyltetrahydrofolate + ADP + phosphate. Contributes to tetrahydrofolate metabolism. Helps regulate carbon flow through the folate-dependent one-carbon metabolic network that supplies carbon for the biosynthesis of purines, thymidine and amino acids. Catalyzes the irreversible conversion of 5-formyltetrahydrofolate (5-CHO-H(4)PteGlu) to yield 5,10-methenyltetrahydrofolate. The sequence is that of 5-formyltetrahydrofolate cyclo-ligase (Mthfs) from Mus musculus (Mouse).